Reading from the N-terminus, the 778-residue chain is LPS-assembly protein LptD (778 aa).

An N-terminal signal peptide occupies residues 1–23; the sequence is MKTRYSVLSVAMTAAFYTQYAQA.

Belongs to the LptD family. As to quaternary structure, component of the lipopolysaccharide transport and assembly complex. Interacts with LptE and LptA.

It is found in the cell outer membrane. In terms of biological role, together with LptE, is involved in the assembly of lipopolysaccharide (LPS) at the surface of the outer membrane. The polypeptide is LPS-assembly protein LptD (Actinobacillus pleuropneumoniae serotype 5b (strain L20)).